Consider the following 536-residue polypeptide: Formate--tetrahydrofolate ligase (536 aa).

Residue 51–58 participates in ATP binding; that stretch reads TAAGEGKT.

Belongs to the formate--tetrahydrofolate ligase family.

It catalyses the reaction (6S)-5,6,7,8-tetrahydrofolate + formate + ATP = (6R)-10-formyltetrahydrofolate + ADP + phosphate. It functions in the pathway one-carbon metabolism; tetrahydrofolate interconversion. The protein is Formate--tetrahydrofolate ligase of Thermoplasma volcanium (strain ATCC 51530 / DSM 4299 / JCM 9571 / NBRC 15438 / GSS1).